A 95-amino-acid polypeptide reads, in one-letter code: Co-chaperonin GroES (95 aa).

Belongs to the GroES chaperonin family. In terms of assembly, heptamer of 7 subunits arranged in a ring. Interacts with the chaperonin GroEL.

It is found in the cytoplasm. Functionally, together with the chaperonin GroEL, plays an essential role in assisting protein folding. The GroEL-GroES system forms a nano-cage that allows encapsulation of the non-native substrate proteins and provides a physical environment optimized to promote and accelerate protein folding. GroES binds to the apical surface of the GroEL ring, thereby capping the opening of the GroEL channel. This chain is Co-chaperonin GroES, found in Desulfotalea psychrophila (strain LSv54 / DSM 12343).